The chain runs to 352 residues: Deoxyhypusine synthase-like protein (352 aa).

It belongs to the deoxyhypusine synthase family.

This is Deoxyhypusine synthase-like protein from Coxiella burnetii (strain Dugway 5J108-111).